The sequence spans 338 residues: Inositol 2-dehydrogenase 4 (338 aa).

This sequence belongs to the Gfo/Idh/MocA family. As to quaternary structure, homotetramer.

The catalysed reaction is myo-inositol + NAD(+) = scyllo-inosose + NADH + H(+). Its function is as follows. Involved in the oxidation of myo-inositol (MI) to 2-keto-myo-inositol (2KMI or 2-inosose). The chain is Inositol 2-dehydrogenase 4 from Saccharopolyspora erythraea (strain ATCC 11635 / DSM 40517 / JCM 4748 / NBRC 13426 / NCIMB 8594 / NRRL 2338).